Consider the following 373-residue polypeptide: Thyroid hormone receptor beta-A (373 aa).

The interval 1–18 (MPSSMSGYIPSYLDKDEL) is modulating. 2 NR C4-type zinc fingers span residues 19–39 (CVVCGDKATGYHYRCITCEGC) and 57–81 (CKYEGKCVIDKVTRNQCQECRFKKC). Positions 19-93 (CVVCGDKATG…VGMATDLVLD (75 aa)) form a DNA-binding region, nuclear receptor. An NR LBD domain is found at 129–373 (EEWELIQVVT…PPLFLEVFED (245 aa)).

This sequence belongs to the nuclear hormone receptor family. NR1 subfamily.

The protein localises to the nucleus. In terms of biological role, high affinity receptor for triiodothyronine (T3). In Xenopus laevis (African clawed frog), this protein is Thyroid hormone receptor beta-A (thrb-a).